The sequence spans 158 residues: uncharacterized protein (158 aa).

The next 2 helical transmembrane spans lie at 66–86 and 94–114; these read LLII…PWIM and FFSL…SLTI.

It localises to the membrane. This is an uncharacterized protein from Saccharomyces cerevisiae (strain ATCC 204508 / S288c) (Baker's yeast).